The chain runs to 143 residues: Monothiol glutaredoxin-5, mitochondrial (143 aa).

A mitochondrion-targeting transit peptide spans 1-28 (MFGRISTRALLRPAFTHRIPSVSLSRFL). The region spanning 33-138 (KQAIESAIES…KLLEDADALV (106 aa)) is the Glutaredoxin domain. Glutathione is bound at residue Lys-50. Position 58 (Cys-58) interacts with [2Fe-2S] cluster. Residues 90–94 (REGVK), Ile-102, and 115–116 (CD) each bind glutathione.

This sequence belongs to the glutaredoxin family. Monothiol subfamily. As to quaternary structure, homodimer.

It is found in the mitochondrion matrix. Monothiol glutaredoxin involved in mitochondrial iron-sulfur (Fe/S) cluster transfer. Receives iron-sulfur clusters from scaffold protein ISU1 and mediates their transfer to apoproteins, to the 4Fe/FS cluster biosynthesis machinery, or export from mitochondrion. This is Monothiol glutaredoxin-5, mitochondrial (GRX5) from Lachancea kluyveri (Yeast).